A 161-amino-acid polypeptide reads, in one-letter code: Regulator of ribonuclease activity A (161 aa).

Belongs to the RraA family. Homotrimer. Binds to both RNA-binding sites in the C-terminal region of Rne and to RhlB.

Its subcellular location is the cytoplasm. Functionally, globally modulates RNA abundance by binding to RNase E (Rne) and regulating its endonucleolytic activity. Can modulate Rne action in a substrate-dependent manner by altering the composition of the degradosome. Modulates RNA-binding and helicase activities of the degradosome. In Shewanella sediminis (strain HAW-EB3), this protein is Regulator of ribonuclease activity A.